Reading from the N-terminus, the 73-residue chain is Alternative prion protein (73 aa).

A helical transmembrane segment spans residues 32–52 (WWWLGAASWWWLGAAPWWWLG).

In terms of tissue distribution, detected in brain homogenate, primary neurons, and peripheral blood mononuclear cells (at protein level).

Its subcellular location is the mitochondrion outer membrane. The sequence is that of Alternative prion protein (PRNP) from Homo sapiens (Human).